The following is a 317-amino-acid chain: NAD kinase (317 aa).

The Proton acceptor role is filled by Asp82. NAD(+)-binding positions include 82–83 (DG), Arg87, 157–158 (NE), Asp187, and 198–203 (TAYAFS).

It belongs to the NAD kinase family. It depends on a divalent metal cation as a cofactor.

The protein resides in the cytoplasm. The catalysed reaction is NAD(+) + ATP = ADP + NADP(+) + H(+). Involved in the regulation of the intracellular balance of NAD and NADP, and is a key enzyme in the biosynthesis of NADP. Catalyzes specifically the phosphorylation on 2'-hydroxyl of the adenosine moiety of NAD to yield NADP. This Corynebacterium diphtheriae (strain ATCC 700971 / NCTC 13129 / Biotype gravis) protein is NAD kinase.